Here is a 425-residue protein sequence, read N- to C-terminus: AFP homolog 2 (425 aa).

Disordered stretches follow at residues 1–207 (MDDD…SGTE) and 288–327 (PFAG…DNSN). The necessary and sufficient for the interaction with TOPLESS stretch occupies residues 7–17 (LELSLGLSCGG). The segment covering 20–34 (GKAKGNNNNNAGSSS) has biased composition (low complexity). Over residues 37–54 (YRAEGGDRSAKVIDDFKN) the composition is skewed to basic and acidic residues. A compositionally biased stretch (low complexity) spans 66 to 81 (PSSGSQRSDSGQQPPQ). Basic and acidic residues predominate over residues 124 to 140 (NDDKKKEKDSSHVDMHE). Polar residues-rich tracts occupy residues 146 to 158 (SHVS…GSTA), 185 to 197 (TDTN…TGQR), and 288 to 299 (PFAGRVPSNSAT). Residues 322-425 (TGDNSNLNTA…MGMTAASAHT (104 aa)) form a necessary and sufficient for the interaction with the JAZ proteins region.

Belongs to the Ninja family. Component of a complex at least composed of TOPLESS, TPR2, TPR3, TIFY4B/PPD2, MYC3/ATR2 and TIFY3B/JAZ12. Interacts (via C-terminus) with TIFY10A/JAZ1; TIFY10B/JAZ2; TIFY6B/JAZ3; TIFY6A/JAZ4; TIFY11A/JAZ5; TIFY11B/JAZ6; TIFY7/JAZ9; TIFY9/JAZ10; TIFY3A/JAZ11; TIFY3B/JAZ12; TIFY4A/PPD1; TIFY4B/PPD2 and TIFY8 (via TIFY domain). Interacts with TOPLESS. Interacts with PAT1H1.

The protein resides in the nucleus. Its function is as follows. Acts as a transcriptional repressor. Negative regulator of jasmonate responses. Connects the JAZ proteins and the non-JAZ protein TIFY8 with the TOPLESS corepressors. The polypeptide is AFP homolog 2 (Arabidopsis thaliana (Mouse-ear cress)).